Reading from the N-terminus, the 648-residue chain is Exoribonuclease 2 (648 aa).

Positions 191–518 (RIDLTYLDFI…INHRLIKSII (328 aa)) constitute an RNB domain. Residues 565–647 (KKKYQANIID…GNKKIIATMI (83 aa)) enclose the S1 motif domain.

This sequence belongs to the RNR ribonuclease family. RNase II subfamily.

It localises to the cytoplasm. It catalyses the reaction Exonucleolytic cleavage in the 3'- to 5'-direction to yield nucleoside 5'-phosphates.. In terms of biological role, involved in mRNA degradation. Hydrolyzes single-stranded polyribonucleotides processively in the 3' to 5' direction. This is Exoribonuclease 2 from Buchnera aphidicola subsp. Cinara cedri (strain Cc).